The chain runs to 240 residues: Coiled-coil domain-containing protein 152 (240 aa).

The stretch at 55–223 (MQTKEVAMKQ…LEQRLSVSKD (169 aa)) forms a coiled coil.

This is Coiled-coil domain-containing protein 152 (CCDC152) from Bos taurus (Bovine).